A 307-amino-acid chain; its full sequence is Protein pxr1 (307 aa).

Positions 1 to 11 (MGLAAPRKKTK) are enriched in basic residues. 2 disordered regions span residues 1–25 (MGLA…SRST) and 144–234 (NATA…SDCD). The segment covering 15 to 25 (DPNNTSWSRST) has biased composition (polar residues). The G-patch domain maps to 25–79 (TDGFGHRILKAQGWTPGGFLGARNATHSDLFTTASASHIRVVLKDDTLGLGARPK). Composition is skewed to basic and acidic residues over residues 154-168 (LRVD…HESE) and 206-221 (GKEL…EKKQ).

It belongs to the PINX1 family.

The protein localises to the nucleus. It localises to the nucleolus. Its function is as follows. Involved in rRNA-processing at A0, A1 and A2 sites and negatively regulates telomerase. This chain is Protein pxr1 (pxr1), found in Neosartorya fischeri (strain ATCC 1020 / DSM 3700 / CBS 544.65 / FGSC A1164 / JCM 1740 / NRRL 181 / WB 181) (Aspergillus fischerianus).